Reading from the N-terminus, the 379-residue chain is Chaperone protein DnaJ (379 aa).

Residues 5-69 enclose the J domain; the sequence is EYYERLGVDK…QKRAAYDQYG (65 aa). The segment at 141–223 adopts a CR-type zinc-finger fold; that stretch reads GVEKQVKYNR…CHGSGHEKVA (83 aa). The Zn(2+) site is built by Cys-154, Cys-157, Cys-171, Cys-174, Cys-197, Cys-200, Cys-211, and Cys-214. 4 CXXCXGXG motif repeats span residues 154 to 161, 171 to 178, 197 to 204, and 211 to 218; these read CHTCDGSG, CHKCGGRG, CDVCHGTG, and CTTCHGSG.

It belongs to the DnaJ family. As to quaternary structure, homodimer. The cofactor is Zn(2+).

The protein resides in the cytoplasm. Its function is as follows. Participates actively in the response to hyperosmotic and heat shock by preventing the aggregation of stress-denatured proteins and by disaggregating proteins, also in an autonomous, DnaK-independent fashion. Unfolded proteins bind initially to DnaJ; upon interaction with the DnaJ-bound protein, DnaK hydrolyzes its bound ATP, resulting in the formation of a stable complex. GrpE releases ADP from DnaK; ATP binding to DnaK triggers the release of the substrate protein, thus completing the reaction cycle. Several rounds of ATP-dependent interactions between DnaJ, DnaK and GrpE are required for fully efficient folding. Also involved, together with DnaK and GrpE, in the DNA replication of plasmids through activation of initiation proteins. The polypeptide is Chaperone protein DnaJ (Lactococcus lactis subsp. cremoris (strain SK11)).